The following is a 60-amino-acid chain: Large ribosomal subunit protein uL30 (60 aa).

This sequence belongs to the universal ribosomal protein uL30 family. Part of the 50S ribosomal subunit.

The polypeptide is Large ribosomal subunit protein uL30 (Pseudoalteromonas translucida (strain TAC 125)).